A 261-amino-acid chain; its full sequence is V-type proton ATPase subunit D (261 aa).

Residue Ser241 is modified to Phosphoserine.

This sequence belongs to the V-ATPase D subunit family. V-ATPase is a heteromultimeric enzyme composed of a peripheral catalytic V1 complex (components A to H) attached to an integral membrane V0 proton pore complex (components: a, c, c'', d and e).

It is found in the vacuole membrane. In terms of biological role, subunit of the peripheral V1 complex of vacuolar ATPase. V-ATPase is responsible for acidifying a variety of intracellular compartments in eukaryotic cells, thus providing most of the energy required for transport processes in the vacuolar system. The chain is V-type proton ATPase subunit D (VHA-D) from Arabidopsis thaliana (Mouse-ear cress).